The chain runs to 776 residues: Rho guanine nucleotide exchange factor 6 (776 aa).

The Calponin-homology (CH) domain occupies 1–111; the sequence is MNPEEQIVTW…TLLAVNKATE (111 aa). Residues 115–151 form a disordered region; that stretch reads SERPCGRSSSLSAANTSQTNPQGAVSSTVSGLQRQSK. Positions 121 to 151 are enriched in polar residues; it reads RSSSLSAANTSQTNPQGAVSSTVSGLQRQSK. Phosphoserine is present on Ser-126. At Thr-133 the chain carries Phosphothreonine. Ser-144 and Ser-150 each carry phosphoserine. An SH3 domain is found at 160–219; that stretch reads SHQLIVKARFNFKQTNEDELSVCKGDIIYVTRVEEGGWWEGTLNGRTGWFPSNYVREIKS. Ser-225 bears the Phosphoserine mark. Residues 241–421 form the DH domain; sequence YYTVVLQNIL…KTLMGQCQDL (181 aa). The 106-residue stretch at 443–548 folds into the PH domain; sequence DIKNLGNVIF…WLEQLNRLIR (106 aa). Ser-488 carries the post-translational modification Phosphoserine. Residues 561–572 show a composition bias toward low complexity; sequence SSSCSAHSSFSS. The segment at 561-581 is disordered; that stretch reads SSSCSAHSSFSSTGQPRGPLE. Ser-640 and Ser-684 each carry phosphoserine.

In terms of assembly, interacts with PAK kinases through the SH3 domain. Interacts with GIT1. Component of cytoplasmic complexes, which also contain PXN, GIT1 and PAK1. Interacts with PARVB. Interacts with BIN2. Identified in a complex with BIN2 and GIT2. Interacts with PARVG; the guanine nucleotide exchange factor activity of ARHGEF6 is essential for PARVG-induced enhancement of cell spreading. Ubiquitous.

The protein resides in the cell projection. It is found in the lamellipodium. In terms of biological role, acts as a RAC1 guanine nucleotide exchange factor (GEF). The sequence is that of Rho guanine nucleotide exchange factor 6 (ARHGEF6) from Homo sapiens (Human).